A 238-amino-acid polypeptide reads, in one-letter code: 1-(5-phosphoribosyl)-5-[(5-phosphoribosylamino)methylideneamino] imidazole-4-carboxamide isomerase (238 aa).

Residue aspartate 8 is the Proton acceptor of the active site. The active-site Proton donor is aspartate 129.

The protein belongs to the HisA/HisF family.

It is found in the cytoplasm. It carries out the reaction 1-(5-phospho-beta-D-ribosyl)-5-[(5-phospho-beta-D-ribosylamino)methylideneamino]imidazole-4-carboxamide = 5-[(5-phospho-1-deoxy-D-ribulos-1-ylimino)methylamino]-1-(5-phospho-beta-D-ribosyl)imidazole-4-carboxamide. It participates in amino-acid biosynthesis; L-histidine biosynthesis; L-histidine from 5-phospho-alpha-D-ribose 1-diphosphate: step 4/9. The protein is 1-(5-phosphoribosyl)-5-[(5-phosphoribosylamino)methylideneamino] imidazole-4-carboxamide isomerase of Lacticaseibacillus casei (strain BL23) (Lactobacillus casei).